The following is a 159-amino-acid chain: 6,7-dimethyl-8-ribityllumazine synthase (159 aa).

5-amino-6-(D-ribitylamino)uracil-binding positions include W26, 58–60, and 80–82; these read SFE and VVI. (2S)-2-hydroxy-3-oxobutyl phosphate is bound at residue 85-86; it reads GT. H88 serves as the catalytic Proton donor. F113 is a 5-amino-6-(D-ribitylamino)uracil binding site. R127 provides a ligand contact to (2S)-2-hydroxy-3-oxobutyl phosphate.

It belongs to the DMRL synthase family.

It carries out the reaction (2S)-2-hydroxy-3-oxobutyl phosphate + 5-amino-6-(D-ribitylamino)uracil = 6,7-dimethyl-8-(1-D-ribityl)lumazine + phosphate + 2 H2O + H(+). It participates in cofactor biosynthesis; riboflavin biosynthesis; riboflavin from 2-hydroxy-3-oxobutyl phosphate and 5-amino-6-(D-ribitylamino)uracil: step 1/2. Functionally, catalyzes the formation of 6,7-dimethyl-8-ribityllumazine by condensation of 5-amino-6-(D-ribitylamino)uracil with 3,4-dihydroxy-2-butanone 4-phosphate. This is the penultimate step in the biosynthesis of riboflavin. This Renibacterium salmoninarum (strain ATCC 33209 / DSM 20767 / JCM 11484 / NBRC 15589 / NCIMB 2235) protein is 6,7-dimethyl-8-ribityllumazine synthase.